An 802-amino-acid chain; its full sequence is Receptor-type tyrosine-protein phosphatase alpha (802 aa).

Positions Met-1–Ala-19 are cleaved as a signal peptide. Topologically, residues Asn-20–Pro-151 are extracellular. N-linked (GlcNAc...) asparagine glycans are attached at residues Asn-21 and Asn-36. A disordered region spans residues Thr-39–Leu-59. Asn-68, Asn-80, Asn-86, Asn-104, and Asn-124 each carry an N-linked (GlcNAc...) asparagine glycan. Polar residues-rich tracts occupy residues Val-79–Asp-115 and Gly-123–Ser-141. The disordered stretch occupies residues Val-79–Arg-146. The chain crosses the membrane as a helical span at residues Ile-152–Met-174. The Cytoplasmic segment spans residues Leu-175–Lys-802. Phosphoserine occurs at positions 211 and 213. Tyrosine-protein phosphatase domains are found at residues Phe-241 to His-501 and Leu-533 to Tyr-791. Residues Asp-410, Cys-442–Arg-448, and Gln-486 contribute to the substrate site. The active-site Phosphocysteine intermediate is the Cys-442. Catalysis depends on Cys-732, which acts as the Phosphocysteine intermediate. Position 798 is a phosphotyrosine (Tyr-798).

It belongs to the protein-tyrosine phosphatase family. Receptor class 4 subfamily. In terms of assembly, part of a complex comprised of PTPRA, BCAR1, BCAR3 (via SH2 domain), and SRC. Within the complex, interacts (when phosphorylated on Tyr-798) with BCAR3 (via SH2 domain). Interacts with GRB2. Post-translationally, integrin binding to extracellular matrix induces phosphorylation at Tyr-798 which induces PTPRA localization and recruitment of BCAR3, BCAR1 and CRK to focal adhesions.

Its subcellular location is the cell membrane. The protein resides in the cell junction. It localises to the focal adhesion. The catalysed reaction is O-phospho-L-tyrosyl-[protein] + H2O = L-tyrosyl-[protein] + phosphate. Functionally, tyrosine protein phosphatase which is involved in integrin-mediated focal adhesion formation. Following integrin engagement, specifically recruits BCAR3, BCAR1 and CRK to focal adhesions thereby promoting SRC-mediated phosphorylation of BRAC1 and the subsequent activation of PAK and small GTPase RAC1 and CDC42. In Homo sapiens (Human), this protein is Receptor-type tyrosine-protein phosphatase alpha (PTPRA).